Here is a 128-residue protein sequence, read N- to C-terminus: Large ribosomal subunit protein bL12c (128 aa).

A disordered region spans residues 103-128 (QEGLGKDAAEDAKKQIEDAGGKVSLT). The span at 106-122 (LGKDAAEDAKKQIEDAG) shows a compositional bias: basic and acidic residues.

This sequence belongs to the bacterial ribosomal protein bL12 family. In terms of assembly, homodimer. Part of the ribosomal stalk of the 50S ribosomal subunit. Forms a multimeric L10(L12)X complex, where L10 forms an elongated spine to which 2 to 4 L12 dimers bind in a sequential fashion. Binds GTP-bound translation factors.

Its subcellular location is the plastid. The protein resides in the chloroplast. Functionally, forms part of the ribosomal stalk which helps the ribosome interact with GTP-bound translation factors. Is thus essential for accurate translation. This chain is Large ribosomal subunit protein bL12c, found in Thalassiosira pseudonana (Marine diatom).